Here is an 827-residue protein sequence, read N- to C-terminus: Probable beta-glucosidase H (827 aa).

The active site involves Asp-223. A PA14 domain is found at 387–546; it reads RLLTNAVMHF…DSAEMVRSAV (160 aa). N-linked (GlcNAc...) asparagine glycosylation is found at Asn-471, Asn-594, Asn-600, and Asn-625.

The protein belongs to the glycosyl hydrolase 3 family.

The protein resides in the secreted. The catalysed reaction is Hydrolysis of terminal, non-reducing beta-D-glucosyl residues with release of beta-D-glucose.. Its pathway is glycan metabolism; cellulose degradation. Its function is as follows. Beta-glucosidases are one of a number of cellulolytic enzymes involved in the degradation of cellulosic biomass. Catalyzes the last step releasing glucose from the inhibitory cellobiose. In Aspergillus oryzae (strain ATCC 42149 / RIB 40) (Yellow koji mold), this protein is Probable beta-glucosidase H (bglH).